Here is a 100-residue protein sequence, read N- to C-terminus: Large ribosomal subunit protein uL23 (100 aa).

The protein belongs to the universal ribosomal protein uL23 family. As to quaternary structure, part of the 50S ribosomal subunit. Contacts protein L29, and trigger factor when it is bound to the ribosome.

One of the early assembly proteins it binds 23S rRNA. One of the proteins that surrounds the polypeptide exit tunnel on the outside of the ribosome. Forms the main docking site for trigger factor binding to the ribosome. The sequence is that of Large ribosomal subunit protein uL23 from Synechococcus sp. (strain CC9902).